The primary structure comprises 347 residues: Leukocyte cell-derived chemotaxin 1 (347 aa).

The tract at residues 1-29 is disordered; the sequence is MAEGSEKVPIARAGPEDVEQGLPPAYTAA. The chain crosses the membrane as a helical span at residues 45–65; the sequence is VLIAGALLLLAGAIGAFYFWK. Residues 103-200 form the BRICHOS domain; that stretch reads GSGSEEAVEV…LCGDLPIFWL (98 aa). The cysteines at positions 130 and 192 are disulfide-linked. Residues 208–281 form a disordered region; that stretch reads KQRERREMKR…DNPYNQLEGE (74 aa). The propeptide occupies 210–213; sequence RERR. Positions 240–276 are enriched in polar residues; the sequence is TRSTPTQLTQDLGPQSNETRPMQQESDQTLNPDNPYN. N-linked (GlcNAc...) asparagine glycosylation occurs at Asn256. 4 disulfides stabilise this stretch: Cys295–Cys299, Cys296–Cys336, Cys306–Cys330, and Cys310–Cys326.

It belongs to the chondromodulin-1 family. After cleavage, the post-translationally modified ChM-I is secreted as a glycoprotein. Expressed in the cartilage and in fetal precartilaginous tissues as well as in heart and eye.

The protein localises to the secreted. It is found in the extracellular space. The protein resides in the extracellular matrix. It localises to the endomembrane system. Its function is as follows. Bifunctional growth regulator. May contribute to the rapid growth of cartilage and vascular invasion prior to the replacement of cartilage by bone during endochondral bone development. Plays a role as antiangiogenic factor in cardiac valves to suppress neovascularization. This chain is Leukocyte cell-derived chemotaxin 1, found in Gallus gallus (Chicken).